A 283-amino-acid chain; its full sequence is Bifunctional protein FolD 2 (283 aa).

NADP(+)-binding positions include 165–167 (GRG), T192, and V233.

The protein belongs to the tetrahydrofolate dehydrogenase/cyclohydrolase family. Homodimer.

The enzyme catalyses (6R)-5,10-methylene-5,6,7,8-tetrahydrofolate + NADP(+) = (6R)-5,10-methenyltetrahydrofolate + NADPH. It carries out the reaction (6R)-5,10-methenyltetrahydrofolate + H2O = (6R)-10-formyltetrahydrofolate + H(+). It participates in one-carbon metabolism; tetrahydrofolate interconversion. Functionally, catalyzes the oxidation of 5,10-methylenetetrahydrofolate to 5,10-methenyltetrahydrofolate and then the hydrolysis of 5,10-methenyltetrahydrofolate to 10-formyltetrahydrofolate. The polypeptide is Bifunctional protein FolD 2 (Saccharopolyspora erythraea (strain ATCC 11635 / DSM 40517 / JCM 4748 / NBRC 13426 / NCIMB 8594 / NRRL 2338)).